Reading from the N-terminus, the 208-residue chain is Protein GrpE (208 aa).

Residues Met-1–Glu-62 form a disordered region. Positions Ser-46–Ala-55 are enriched in acidic residues.

Belongs to the GrpE family. Homodimer.

The protein resides in the cytoplasm. Its function is as follows. Participates actively in the response to hyperosmotic and heat shock by preventing the aggregation of stress-denatured proteins, in association with DnaK and GrpE. It is the nucleotide exchange factor for DnaK and may function as a thermosensor. Unfolded proteins bind initially to DnaJ; upon interaction with the DnaJ-bound protein, DnaK hydrolyzes its bound ATP, resulting in the formation of a stable complex. GrpE releases ADP from DnaK; ATP binding to DnaK triggers the release of the substrate protein, thus completing the reaction cycle. Several rounds of ATP-dependent interactions between DnaJ, DnaK and GrpE are required for fully efficient folding. The sequence is that of Protein GrpE from Staphylococcus haemolyticus (strain JCSC1435).